Consider the following 50-residue polypeptide: VVGGDECNINEHRSLVAIFNSTGFFCSGILLNQEWVLTASHCDSTNFQMK.

Residues 1–50 (VVGGDECNINEHRSLVAIFNSTGFFCSGILLNQEWVLTASHCDSTNFQMK) form the Peptidase S1 domain. An N-linked (GlcNAc...) asparagine glycan is attached at asparagine 20. A disulfide bridge links cysteine 26 with cysteine 42. Residue histidine 41 is the Charge relay system of the active site.

Belongs to the peptidase S1 family. Snake venom subfamily. In terms of assembly, monomer. Post-translationally, N-glycosylated. As to expression, expressed by the venom gland.

It localises to the secreted. Inhibited by serine protease inhibitors PMSF, benzamidine, leupeptin and aprotinin, as well as by copper (Cu2+) and manganese (Mn2+) ions. Not inhibited by metalloprotease inhibitors EDTA, EGTA and 1,10-phenanthroline, as well as by barium (Ba2+) and calcium ion (Ca2+). Snake venom serine protease that interferes with the hemostatic system of the prey. It preferentially degrades the Bbeta chain (FGB) of fibrinogen, with minor effects on the Aalpha chain (FGA). It presents a lower ability to degrade fibrin clots than BpirSP41. It hydrolyzes chromogenic substrates S-2238 (used for testing thrombin activity), S-2222 (factor Xa), S-2266 (glandular kallikrein and factor XIa), S-2302 (plasma kallikrein, factor XIa and XIIa), and S-2251 (plasmin). It shows a decrease in the clotting time of human plasma in the presence of increasing doses of the enzyme. Its minimum coagulant dose (MCD) is 3.5 ug. It also promotes platelet aggregation in a concentration-dependent manner in the presence or absence of calcium. It also shows 20% inhibition of the hemolytic activity promoted by the complement pathways and possess only a minor role in the induction of edema and pain in rat. The polypeptide is Thrombin-like enzyme BpirSP27 (Bothrops pirajai (Piraja's lancehead)).